Here is a 256-residue protein sequence, read N- to C-terminus: 6-phosphogluconolactonase (256 aa).

This sequence belongs to the glucosamine/galactosamine-6-phosphate isomerase family. 6-phosphogluconolactonase subfamily.

It carries out the reaction 6-phospho-D-glucono-1,5-lactone + H2O = 6-phospho-D-gluconate + H(+). It participates in carbohydrate degradation; pentose phosphate pathway; D-ribulose 5-phosphate from D-glucose 6-phosphate (oxidative stage): step 2/3. Hydrolysis of 6-phosphogluconolactone to 6-phosphogluconate. The chain is 6-phosphogluconolactonase (pgl) from Chlamydia trachomatis serovar D (strain ATCC VR-885 / DSM 19411 / UW-3/Cx).